An 818-amino-acid chain; its full sequence is Myosin-A (818 aa).

Residue Ser19 is modified to Phosphoserine; by PKG. A Myosin motor domain is found at 97–771; sequence MSFGDIGLLN…GAKILTKIQR (675 aa). ATP is bound at residue 191 to 198; that stretch reads GESGAGKT. The tract at residues 661 to 671 is actin-binding; sequence PHFIRCIKPNE. Residues 773-818 form a tail region; the sequence is KLVEWENCVSVIEAAILKHKYKQKVNKNIPSLLRVQAHIRKKMVAQ.

It belongs to the TRAFAC class myosin-kinesin ATPase superfamily. Myosin family. Component of the glideosome complex composed of GAP50, GAP45, MTIP and MyoA; the complex is formed during the late schizont stage and in merozoites. MyoA, MTIP and GAP45 probably form an initial complex in the cytoplasm which is then recruited to the outer face of the inner membrane complex via the interaction with GAP50. Interacts with ACT1.

It localises to the cell membrane. Myosins are actin-based motor molecules with ATPase activity. Unconventional myosins serve in intracellular movements. Their highly divergent tails are presumed to bind to membranous compartments, which would be moved relative to actin filaments. The polypeptide is Myosin-A (Plasmodium falciparum (isolate 3D7)).